A 585-amino-acid polypeptide reads, in one-letter code: Cyclic nucleotide-binding domain-containing protein 2 (585 aa).

116 to 239 is an a nucleoside 3',5'-cyclic phosphate binding site; the sequence is SYRNYAEPLQ…DAQYRFEFFR (124 aa).

The protein resides in the cytoplasm. It localises to the cytosol. Its function is as follows. Essential for male fertility. Plays an important role in spermatogenesis and regulates sperm motility by controlling the development of the flagellar bending of sperm. The protein is Cyclic nucleotide-binding domain-containing protein 2 (CNBD2) of Macaca fascicularis (Crab-eating macaque).